A 340-amino-acid chain; its full sequence is Replication factor C subunit 2 (340 aa).

ATP is bound at residue 59–66 (GSPGTGKT).

This sequence belongs to the activator 1 small subunits family. Heteropentamer of subunits rfc1, rfc2, rfc3, rfc4 and rfc5 that forms a complex (RFC) with PCNA in the presence of ATP. Two other complexes exist where rfc1 can be replaced by either ctf18 or elg1 to form the ctf18-RFC or the elg1-RFC complexes respectively.

Its subcellular location is the nucleus. Its function is as follows. The elongation of primed DNA templates by DNA polymerase delta and epsilon requires the action of the accessory proteins PCNA and activator 1. Subunit 2 binds ATP and single-stranded DNA. The sequence is that of Replication factor C subunit 2 (rfc2) from Schizosaccharomyces pombe (strain 972 / ATCC 24843) (Fission yeast).